A 1377-amino-acid chain; its full sequence is DNA-directed RNA polymerase subunit beta' (1377 aa).

The Zn(2+) site is built by Cys60, Cys62, Cys75, and Cys78. Residues Asp449, Asp451, and Asp453 each contribute to the Mg(2+) site. The Zn(2+) site is built by Cys777, Cys851, Cys858, and Cys861.

This sequence belongs to the RNA polymerase beta' chain family. The RNAP catalytic core consists of 2 alpha, 1 beta, 1 beta' and 1 omega subunit. When a sigma factor is associated with the core the holoenzyme is formed, which can initiate transcription. Requires Mg(2+) as cofactor. It depends on Zn(2+) as a cofactor.

The enzyme catalyses RNA(n) + a ribonucleoside 5'-triphosphate = RNA(n+1) + diphosphate. In terms of biological role, DNA-dependent RNA polymerase catalyzes the transcription of DNA into RNA using the four ribonucleoside triphosphates as substrates. This chain is DNA-directed RNA polymerase subunit beta', found in Borreliella burgdorferi (strain ATCC 35210 / DSM 4680 / CIP 102532 / B31) (Borrelia burgdorferi).